The primary structure comprises 239 residues: Ribonuclease PH (239 aa).

Phosphate contacts are provided by residues R86 and 124-126 (GTR).

The protein belongs to the RNase PH family. Homohexameric ring arranged as a trimer of dimers.

It catalyses the reaction tRNA(n+1) + phosphate = tRNA(n) + a ribonucleoside 5'-diphosphate. Its function is as follows. Phosphorolytic 3'-5' exoribonuclease that plays an important role in tRNA 3'-end maturation. Removes nucleotide residues following the 3'-CCA terminus of tRNAs; can also add nucleotides to the ends of RNA molecules by using nucleoside diphosphates as substrates, but this may not be physiologically important. Probably plays a role in initiation of 16S rRNA degradation (leading to ribosome degradation) during starvation. The protein is Ribonuclease PH of Rickettsia bellii (strain OSU 85-389).